The following is a 258-amino-acid chain: tRNA (guanine-N(7)-)-methyltransferase (258 aa).

S-adenosyl-L-methionine contacts are provided by residues Gly-76, 99–100, 132–133, and Leu-152; these read EI and NA. The active site involves Asp-155. An S-adenosyl-L-methionine-binding site is contributed by 230 to 232; that stretch reads TEE.

It belongs to the class I-like SAM-binding methyltransferase superfamily. TrmB family.

The protein localises to the nucleus. It catalyses the reaction guanosine(46) in tRNA + S-adenosyl-L-methionine = N(7)-methylguanosine(46) in tRNA + S-adenosyl-L-homocysteine. It participates in tRNA modification; N(7)-methylguanine-tRNA biosynthesis. In terms of biological role, catalyzes the formation of N(7)-methylguanine at position 46 (m7G46) in tRNA. This Brugia malayi (Filarial nematode worm) protein is tRNA (guanine-N(7)-)-methyltransferase.